A 156-amino-acid polypeptide reads, in one-letter code: Endoribonuclease YbeY (156 aa).

Histidine 122, histidine 126, and histidine 132 together coordinate Zn(2+).

This sequence belongs to the endoribonuclease YbeY family. It depends on Zn(2+) as a cofactor.

It is found in the cytoplasm. Single strand-specific metallo-endoribonuclease involved in late-stage 70S ribosome quality control and in maturation of the 3' terminus of the 16S rRNA. The sequence is that of Endoribonuclease YbeY from Bacillus cereus (strain B4264).